Consider the following 127-residue polypeptide: MSANKLKVSVISPEKILYKGEVDSLIVPGSEGFFGILPNHAPLVATLGIGILEIRKGEKLKVLSVEGGFVEIKDNSISILTDHGALKEDIDLEVEKKNLAEAEKLPPSDSKNLFLQKTKTRILVASR.

This sequence belongs to the ATPase epsilon chain family. F-type ATPases have 2 components, CF(1) - the catalytic core - and CF(0) - the membrane proton channel. CF(1) has five subunits: alpha(3), beta(3), gamma(1), delta(1), epsilon(1). CF(0) has three main subunits: a, b and c.

It localises to the cell inner membrane. Functionally, produces ATP from ADP in the presence of a proton gradient across the membrane. The sequence is that of ATP synthase epsilon chain from Leptospira interrogans serogroup Icterohaemorrhagiae serovar copenhageni (strain Fiocruz L1-130).